The sequence spans 123 residues: Large ribosomal subunit protein bL12 (123 aa).

The protein belongs to the bacterial ribosomal protein bL12 family. As to quaternary structure, homodimer. Part of the ribosomal stalk of the 50S ribosomal subunit. Forms a multimeric L10(L12)X complex, where L10 forms an elongated spine to which 2 to 4 L12 dimers bind in a sequential fashion. Binds GTP-bound translation factors.

Functionally, forms part of the ribosomal stalk which helps the ribosome interact with GTP-bound translation factors. Is thus essential for accurate translation. This is Large ribosomal subunit protein bL12 from Dehalococcoides mccartyi (strain ATCC BAA-2100 / JCM 16839 / KCTC 5957 / BAV1).